The chain runs to 653 residues: Hepatocyte growth factor activator serine protease (653 aa).

An N-terminal signal peptide occupies residues 1 to 34 (MGRQAWISSLCPLPRPCPFLLLLLLLVVPRGAQP). Residues 34 to 98 (PQAGRNHTEP…SSSPPGGQVL (65 aa)) are disordered. Residues 35 to 369 (QAGRNHTEPP…RLTACESLAR (335 aa)) constitute a propeptide, removed in mature form. Residues Asn39, Asn47, and Asn63 are each glycosylated (N-linked (GlcNAc...) asparagine). Residues 47–59 (NVTATPVTPTIPV) are compositionally biased toward low complexity. A Fibronectin type-II domain is found at 100–147 (ESGQPCRFPFRYGGRMLHSCTSEGSAYRKWCATTHNYDRDRAWGYCAE). 19 disulfides stabilise this stretch: Cys105-Cys130, Cys119-Cys145, Cys161-Cys172, Cys166-Cys183, Cys185-Cys194, Cys199-Cys227, Cys225-Cys234, Cys242-Cys253, Cys247-Cys264, Cys266-Cys275, Cys283-Cys364, Cys304-Cys346, Cys335-Cys359, Cys392-Cys519, Cys430-Cys446, Cys438-Cys508, Cys533-Cys602, Cys565-Cys581, and Cys592-Cys620. The EGF-like 1 domain occupies 157-195 (ILDPCASGPCLNGGTCSSTHDHGSYHCSCPLAFTGKDCG). One can recognise a Fibronectin type-I domain in the interval 197 to 237 (EKCFDETRYEYFEVGDHWARVSEGHVEQCGCMEGQARCEDT). Residues 238 to 276 (HHTACLSSPCLNGGTCHLIVGTGTSVCTCPLGYAGRFCN) form the EGF-like 2 domain. The Kringle domain maps to 283 to 364 (CFLGNGTEYR…SWEYCRLTAC (82 aa)). An N-linked (GlcNAc...) asparagine glycan is attached at Asn287. Residues 406–644 (IIGGSSSLPG…YVDWINDRIR (239 aa)) enclose the Peptidase S1 domain. The Charge relay system role is filled by His445. The N-linked (GlcNAc...) asparagine glycan is linked to Asn466. Catalysis depends on Asp495, which acts as the Charge relay system. A glycan (N-linked (GlcNAc...) asparagine) is linked at Asn544. The Charge relay system role is filled by Ser596.

This sequence belongs to the peptidase S1 family. Heterodimer of a short chain and a long chain linked by a disulfide bond. In terms of processing, the active form of HGFAC presents in the serum is derived from the COOH-terminal region of the precursor by the cleavage of bonds between Arg-369 and Val-370 and Arg-405 and Ile-406.

The protein resides in the secreted. In terms of biological role, serine protease that hydrolyzes the inactive zymogen hepatocyte growth factor (HGFsc) to an activated disulfide-linked heterodimer, then initiating hepatocyte growth factor receptor signaling pathway. The sequence is that of Hepatocyte growth factor activator serine protease from Mus musculus (Mouse).